Reading from the N-terminus, the 230-residue chain is MKNINAIILLSSLTSASVFAGAYVENREAYNLASDQGEVMLRVGYNFDMGAGIMLTNTYTFQREDELKHGYNEIEGWYPLFKPTDKLTIQPGGLINDKSIGSGGAVYLDVNYKFTPWFNLTVRNRFNHNNYSSTDLNGDLDNNDSYEIGNYWNFIITDKFSYTFEPHYFYNINDFNSGNGTKHHWEITNTFRYRINEHWLPYIELRWLDRNVEPYHREQNQIRIGTKYFF.

Positions 1 to 20 (MKNINAIILLSSLTSASVFA) are cleaved as a signal peptide.

Belongs to the oligogalacturonate-specific porin KdgM (TC 1.B.35) family. OmpL subfamily.

It localises to the cell outer membrane. In terms of biological role, outer membrane channel protein that allows an efficient diffusion of low-molecular-weight solutes such as small sugars and tetraglycine. However, the specific substrate recognized by the OmpL channel is unknown. This is Porin OmpL (ompL) from Escherichia coli O157:H7.